A 492-amino-acid chain; its full sequence is Bifunctional purine biosynthesis protein PurH (492 aa).

Residues 1–144 form the MGS-like domain; the sequence is MKKAILSVSN…KNYKHVTTIV (144 aa).

This sequence belongs to the PurH family.

The catalysed reaction is (6R)-10-formyltetrahydrofolate + 5-amino-1-(5-phospho-beta-D-ribosyl)imidazole-4-carboxamide = 5-formamido-1-(5-phospho-D-ribosyl)imidazole-4-carboxamide + (6S)-5,6,7,8-tetrahydrofolate. It catalyses the reaction IMP + H2O = 5-formamido-1-(5-phospho-D-ribosyl)imidazole-4-carboxamide. It functions in the pathway purine metabolism; IMP biosynthesis via de novo pathway; 5-formamido-1-(5-phospho-D-ribosyl)imidazole-4-carboxamide from 5-amino-1-(5-phospho-D-ribosyl)imidazole-4-carboxamide (10-formyl THF route): step 1/1. Its pathway is purine metabolism; IMP biosynthesis via de novo pathway; IMP from 5-formamido-1-(5-phospho-D-ribosyl)imidazole-4-carboxamide: step 1/1. The chain is Bifunctional purine biosynthesis protein PurH from Staphylococcus aureus (strain MRSA252).